Consider the following 217-residue polypeptide: 3,4-dihydroxy-2-butanone 4-phosphate synthase (217 aa).

D-ribulose 5-phosphate contacts are provided by residues 37–38 (RE), Asp-42, 150–154 (RRGHT), and Glu-174. A Mg(2+)-binding site is contributed by Glu-38. His-153 serves as a coordination point for Mg(2+).

Belongs to the DHBP synthase family. As to quaternary structure, homodimer. Mg(2+) is required as a cofactor. Mn(2+) serves as cofactor.

The enzyme catalyses D-ribulose 5-phosphate = (2S)-2-hydroxy-3-oxobutyl phosphate + formate + H(+). Its pathway is cofactor biosynthesis; riboflavin biosynthesis; 2-hydroxy-3-oxobutyl phosphate from D-ribulose 5-phosphate: step 1/1. Its function is as follows. Catalyzes the conversion of D-ribulose 5-phosphate to formate and 3,4-dihydroxy-2-butanone 4-phosphate. In Shewanella woodyi (strain ATCC 51908 / MS32), this protein is 3,4-dihydroxy-2-butanone 4-phosphate synthase.